Consider the following 360-residue polypeptide: Photosystem II protein D1 1 (360 aa).

3 consecutive transmembrane segments (helical) span residues 29-46 (YVGW…AATV), 118-133 (HFLI…QWEL), and 142-156 (WICV…SATA). Histidine 118 provides a ligand contact to chlorophyll a. A pheophytin a-binding site is contributed by tyrosine 126. [CaMn4O5] cluster-binding residues include aspartate 170 and glutamate 189. The chain crosses the membrane as a helical span at residues 197–218 (FHMLGVAGVFGGSLFSAMHGSL). Histidine 198 serves as a coordination point for chlorophyll a. A quinone contacts are provided by residues histidine 215 and 264–265 (SF). Residue histidine 215 coordinates Fe cation. Histidine 272 is a binding site for Fe cation. The chain crosses the membrane as a helical span at residues 274 to 288 (FLAAWPVIGIWFTAL). Positions 332, 333, 342, and 344 each coordinate [CaMn4O5] cluster. Positions 345–360 (AGEVAPVALTAPAING) are excised as a propeptide.

It belongs to the reaction center PufL/M/PsbA/D family. PSII is composed of 1 copy each of membrane proteins PsbA, PsbB, PsbC, PsbD, PsbE, PsbF, PsbH, PsbI, PsbJ, PsbK, PsbL, PsbM, PsbT, PsbX, PsbY, PsbZ, Psb30/Ycf12, peripheral proteins PsbO, CyanoQ (PsbQ), PsbU, PsbV and a large number of cofactors. It forms dimeric complexes. The D1/D2 heterodimer binds P680, chlorophylls that are the primary electron donor of PSII, and subsequent electron acceptors. It shares a non-heme iron and each subunit binds pheophytin, quinone, additional chlorophylls, carotenoids and lipids. D1 provides most of the ligands for the Mn4-Ca-O5 cluster of the oxygen-evolving complex (OEC). There is also a Cl(-1) ion associated with D1 and D2, which is required for oxygen evolution. The PSII complex binds additional chlorophylls, carotenoids and specific lipids. is required as a cofactor. In terms of processing, tyr-161 forms a radical intermediate that is referred to as redox-active TyrZ, YZ or Y-Z. C-terminally processed by CtpA; processing is essential to allow assembly of the oxygen-evolving complex and thus photosynthetic growth.

Its subcellular location is the cellular thylakoid membrane. The catalysed reaction is 2 a plastoquinone + 4 hnu + 2 H2O = 2 a plastoquinol + O2. Photosystem II (PSII) is a light-driven water:plastoquinone oxidoreductase that uses light energy to abstract electrons from H(2)O, generating O(2) and a proton gradient subsequently used for ATP formation. It consists of a core antenna complex that captures photons, and an electron transfer chain that converts photonic excitation into a charge separation. The D1/D2 (PsbA/PsbD) reaction center heterodimer binds P680, the primary electron donor of PSII as well as several subsequent electron acceptors. This chain is Photosystem II protein D1 1, found in Nostoc sp. (strain PCC 7120 / SAG 25.82 / UTEX 2576).